A 227-amino-acid chain; its full sequence is Abasic site processing protein YoaM (227 aa).

Cys2 acts as the Nucleophile in catalysis. Position 2 is a thiazolidine linkage to a ring-opened DNA abasic site (Cys2). Residue Glu106 is part of the active site.

This sequence belongs to the SOS response-associated peptidase family.

Formation and reversal of DNA-protein cross-link depends on DNA context. Catalyzes formation of the thiazolidine linkage in presence of abasic sites in single-stranded DNA. Mediates the reversal of the thiazolidine cross-link in presence of double stranded DNA. Functionally, sensor of abasic sites in single-stranded DNA (ssDNA) required to preserve genome integrity by promoting error-free repair of abasic sites. Recognizes and binds abasic sites in ssDNA at replication forks and chemically modifies the lesion by forming a covalent cross-link with DNA: forms a stable thiazolidine linkage between a ring-opened abasic site and the alpha-amino and sulfhydryl substituents of its N-terminal catalytic cysteine residue. The DNA-protein cross-link is then reversed: able to catalyze the reversal of the thiazolidine cross-link and cycle between a cross-link and a non-cross-linked state depending on DNA context: mediates self-reversal of the thiazolidine cross-link in double stranded DNA. May act as a protease: mediates autocatalytic processing of its N-terminal methionine in order to expose the catalytic cysteine. The polypeptide is Abasic site processing protein YoaM (yoaM) (Bacillus subtilis (strain 168)).